Consider the following 335-residue polypeptide: Glyceraldehyde-3-phosphate dehydrogenase, cytosolic (335 aa).

NAD(+) is bound by residues Arg-13–Ile-14, Asp-35, and Arg-80. D-glyceraldehyde 3-phosphate-binding positions include Ser-151–Thr-153, Thr-182, Thr-211–Gly-212, and Arg-234. The Nucleophile role is filled by Cys-152. Residue Asn-316 participates in NAD(+) binding.

This sequence belongs to the glyceraldehyde-3-phosphate dehydrogenase family. As to quaternary structure, homotetramer.

The protein localises to the cytoplasm. It carries out the reaction D-glyceraldehyde 3-phosphate + phosphate + NAD(+) = (2R)-3-phospho-glyceroyl phosphate + NADH + H(+). It participates in carbohydrate degradation; glycolysis; pyruvate from D-glyceraldehyde 3-phosphate: step 1/5. The sequence is that of Glyceraldehyde-3-phosphate dehydrogenase, cytosolic (GAPC) from Gracilaria gracilis (Red alga).